The primary structure comprises 178 residues: MRCPFCGHEDTQVKDSRPHEDGAAIRRRRICAACSQRFTTIERVQLRDLYVVKADDRRVPFERDKLARSVRIALRKRPVDEERIERIVNGLVRQLEASGETDIPSRDIGKLVMGTLREVDIVAYIRFASVHWDFRETKDFAAILQSIPGTADGDVPVVPGDAAAAIAAESGPGGVKRR.

The segment at 1–21 (MRCPFCGHEDTQVKDSRPHED) is disordered. A zinc finger lies at 3–34 (CPFCGHEDTQVKDSRPHEDGAAIRRRRICAAC). Residues 7–21 (GHEDTQVKDSRPHED) are compositionally biased toward basic and acidic residues. In terms of domain architecture, ATP-cone spans 49 to 139 (LYVVKADDRR…VHWDFRETKD (91 aa)).

The protein belongs to the NrdR family. It depends on Zn(2+) as a cofactor.

In terms of biological role, negatively regulates transcription of bacterial ribonucleotide reductase nrd genes and operons by binding to NrdR-boxes. The polypeptide is Transcriptional repressor NrdR (Gluconacetobacter diazotrophicus (strain ATCC 49037 / DSM 5601 / CCUG 37298 / CIP 103539 / LMG 7603 / PAl5)).